The following is a 135-amino-acid chain: Sex-regulated protein janus-A (135 aa).

K37 provides a ligand contact to substrate. The Proton acceptor role is filled by H63. 104–106 provides a ligand contact to substrate; sequence SQG.

The protein belongs to the janus family.

JanA and janB regulate somatic sex differentiation. This Drosophila mauritiana (Fruit fly) protein is Sex-regulated protein janus-A (janA).